The chain runs to 497 residues: Probable cytosol aminopeptidase (497 aa).

Mn(2+)-binding residues include Lys-263 and Asp-268. The active site involves Lys-275. Residues Asp-286, Asp-345, and Glu-347 each contribute to the Mn(2+) site. Arg-349 is a catalytic residue.

This sequence belongs to the peptidase M17 family. It depends on Mn(2+) as a cofactor.

Its subcellular location is the cytoplasm. It carries out the reaction Release of an N-terminal amino acid, Xaa-|-Yaa-, in which Xaa is preferably Leu, but may be other amino acids including Pro although not Arg or Lys, and Yaa may be Pro. Amino acid amides and methyl esters are also readily hydrolyzed, but rates on arylamides are exceedingly low.. The enzyme catalyses Release of an N-terminal amino acid, preferentially leucine, but not glutamic or aspartic acids.. Its function is as follows. Presumably involved in the processing and regular turnover of intracellular proteins. Catalyzes the removal of unsubstituted N-terminal amino acids from various peptides. In Brucella suis biovar 1 (strain 1330), this protein is Probable cytosol aminopeptidase.